Reading from the N-terminus, the 718-residue chain is Methionine--tRNA ligase (718 aa).

Residues Pro-27–His-37 carry the 'HIGH' region motif. Residues Cys-158, Cys-161, Cys-171, and Cys-174 each coordinate Zn(2+). The short motif at Lys-348 to Ser-352 is the 'KMSKS' region element. Lys-351 contributes to the ATP binding site. Positions Asp-612 to Lys-718 constitute a tRNA-binding domain.

This sequence belongs to the class-I aminoacyl-tRNA synthetase family. MetG type 1 subfamily. Homodimer. Zn(2+) is required as a cofactor.

Its subcellular location is the cytoplasm. The enzyme catalyses tRNA(Met) + L-methionine + ATP = L-methionyl-tRNA(Met) + AMP + diphosphate. Is required not only for elongation of protein synthesis but also for the initiation of all mRNA translation through initiator tRNA(fMet) aminoacylation. This Burkholderia cenocepacia (strain ATCC BAA-245 / DSM 16553 / LMG 16656 / NCTC 13227 / J2315 / CF5610) (Burkholderia cepacia (strain J2315)) protein is Methionine--tRNA ligase.